The chain runs to 949 residues: L-fucokinase/L-fucose-1-P guanylyltransferase (949 aa).

The tract at residues 25–191 (DWFCTSDPVG…DFMLQKPSLA (167 aa)) is fucose-1-phosphate guanylyltransferase. The segment at 559–949 (LLRDGLLDGI…SDKGFQVSRS (391 aa)) is L-fucokinase.

This sequence belongs to the GHMP kinase family. As to quaternary structure, homotetramer. Mn(2+) serves as cofactor. It depends on Mg(2+) as a cofactor.

It catalyses the reaction L-fucose + ATP = beta-L-fucose 1-phosphate + ADP + H(+). The catalysed reaction is beta-L-fucose 1-phosphate + GTP + H(+) = GDP-beta-L-fucose + diphosphate. In terms of biological role, bifunctional enzyme involved in the salvage pathway of GDP-fucose synthesis. Catalyzes two successive reactions, the ATP-dependent phosphorylation of L-fucose to L-fucose 1-phosphate, and its guanylylation to GDP-L-fucose. GDP-fucose is an important fucose donor in the process of fucosylated oligosaccharides formation. The chain is L-fucokinase/L-fucose-1-P guanylyltransferase from Bacteroides fragilis.